Consider the following 45-residue polypeptide: Cytochrome b559 subunit beta (45 aa).

Residues 20-36 (WLALHTLGIPTVFFLGA) traverse the membrane as a helical segment. H24 contributes to the heme binding site.

Belongs to the PsbE/PsbF family. In terms of assembly, heterodimer of an alpha subunit and a beta subunit. PSII is composed of 1 copy each of membrane proteins PsbA, PsbB, PsbC, PsbD, PsbE, PsbF, PsbH, PsbI, PsbJ, PsbK, PsbL, PsbM, PsbT, PsbX, PsbY, PsbZ, Psb30/Ycf12, peripheral proteins PsbO, CyanoQ (PsbQ), PsbU, PsbV and a large number of cofactors. It forms dimeric complexes. Heme b is required as a cofactor.

It localises to the cellular thylakoid membrane. Functionally, this b-type cytochrome is tightly associated with the reaction center of photosystem II (PSII). PSII is a light-driven water:plastoquinone oxidoreductase that uses light energy to abstract electrons from H(2)O, generating O(2) and a proton gradient subsequently used for ATP formation. It consists of a core antenna complex that captures photons, and an electron transfer chain that converts photonic excitation into a charge separation. This is Cytochrome b559 subunit beta from Synechococcus sp. (strain CC9902).